The chain runs to 550 residues: Dipeptide-binding protein (550 aa).

Positions 1-22 are cleaved as a signal peptide; the sequence is MKQAKIIGLSTVIALSGIILVA. Cys23 carries the N-palmitoyl cysteine lipid modification. Residue Cys23 is the site of S-diacylglycerol cysteine attachment.

This sequence belongs to the bacterial solute-binding protein 5 family. In terms of assembly, the complex is composed of two ATP-binding proteins (DppD and DppF), two transmembrane proteins (DppB and DppC) and a solute-binding protein (DppA).

Its subcellular location is the cell membrane. In terms of biological role, part of the ABC transporter DppABCDF involved in dipeptide transport. Binds di- and tripeptides with high affinity. Requires a free N-terminal alpha-amino group and an alpha-peptide bound contiguous with the N-terminal amino group, has a strong selectivity for L-residues, and shows preference for dipeptides containing methionine or arginine, followed by hydrophobic tripeptides consisting of leucine or valine residues. The chain is Dipeptide-binding protein from Lactococcus lactis subsp. cremoris (strain MG1363).